The chain runs to 170 residues: Urease accessory protein UreE (170 aa).

The protein belongs to the UreE family.

Its subcellular location is the cytoplasm. Functionally, involved in urease metallocenter assembly. Binds nickel. Probably functions as a nickel donor during metallocenter assembly. The protein is Urease accessory protein UreE of Helicobacter acinonychis (strain Sheeba).